The primary structure comprises 265 residues: Glutamate racemase (265 aa).

Residues 9–10 (DS) and 41–42 (YS) contribute to the substrate site. C73 functions as the Proton donor/acceptor in the catalytic mechanism. Residue 74 to 75 (NT) coordinates substrate. The active-site Proton donor/acceptor is C184. 185 to 186 (TH) is a binding site for substrate.

This sequence belongs to the aspartate/glutamate racemases family.

The enzyme catalyses L-glutamate = D-glutamate. Its pathway is cell wall biogenesis; peptidoglycan biosynthesis. Its function is as follows. Provides the (R)-glutamate required for cell wall biosynthesis. This is Glutamate racemase from Actinobacillus pleuropneumoniae serotype 3 (strain JL03).